Here is a 132-residue protein sequence, read N- to C-terminus: Small ribosomal subunit protein uS8 (132 aa).

It belongs to the universal ribosomal protein uS8 family. As to quaternary structure, part of the 30S ribosomal subunit. Contacts proteins S5 and S12.

One of the primary rRNA binding proteins, it binds directly to 16S rRNA central domain where it helps coordinate assembly of the platform of the 30S subunit. The polypeptide is Small ribosomal subunit protein uS8 (Afipia carboxidovorans (strain ATCC 49405 / DSM 1227 / KCTC 32145 / OM5) (Oligotropha carboxidovorans)).